The following is a 303-amino-acid chain: UDP-N-acetylenolpyruvoylglucosamine reductase (303 aa).

The FAD-binding PCMH-type domain maps to 29–196 (KIGGPADVLV…LEAVLQLEQK (168 aa)). Residue R174 is part of the active site. S225 acts as the Proton donor in catalysis. Residue E295 is part of the active site.

It belongs to the MurB family. FAD is required as a cofactor.

The protein localises to the cytoplasm. The catalysed reaction is UDP-N-acetyl-alpha-D-muramate + NADP(+) = UDP-N-acetyl-3-O-(1-carboxyvinyl)-alpha-D-glucosamine + NADPH + H(+). It functions in the pathway cell wall biogenesis; peptidoglycan biosynthesis. In terms of biological role, cell wall formation. The polypeptide is UDP-N-acetylenolpyruvoylglucosamine reductase (Bacillus licheniformis (strain ATCC 14580 / DSM 13 / JCM 2505 / CCUG 7422 / NBRC 12200 / NCIMB 9375 / NCTC 10341 / NRRL NRS-1264 / Gibson 46)).